The chain runs to 227 residues: Phosphoglycolate phosphatase (227 aa).

D9 serves as the catalytic Nucleophile. 3 residues coordinate Mg(2+): D9, D11, and D171.

Belongs to the HAD-like hydrolase superfamily. CbbY/CbbZ/Gph/YieH family. Mg(2+) is required as a cofactor.

The catalysed reaction is 2-phosphoglycolate + H2O = glycolate + phosphate. It functions in the pathway organic acid metabolism; glycolate biosynthesis; glycolate from 2-phosphoglycolate: step 1/1. Its function is as follows. Specifically catalyzes the dephosphorylation of 2-phosphoglycolate. Is involved in the dissimilation of the intracellular 2-phosphoglycolate formed during the DNA repair of 3'-phosphoglycolate ends, a major class of DNA lesions induced by oxidative stress. In Mesorhizobium japonicum (strain LMG 29417 / CECT 9101 / MAFF 303099) (Mesorhizobium loti (strain MAFF 303099)), this protein is Phosphoglycolate phosphatase.